The primary structure comprises 664 residues: Probable 3',5'-cyclic phosphodiesterase pde-1 (664 aa).

2 disordered regions span residues 24 to 60 and 113 to 142; these read TSSASEEHGDSDKKLLSVQLITPRDEEEQTSSRSIKI and RNQKEKSNSDDNCQEKEPTSPSSSRKKSYD. Composition is skewed to basic and acidic residues over residues 28-38 and 114-130; these read SEEHGDSDKKL and NQKEKSNSDDNCQEKEP. A PDEase domain is found at 256-634; sequence VQCPIPPEIA…AHWKERAAKE (379 aa). The Proton donor role is filled by His-333. Residues His-337, His-373, Asp-374, and Asp-480 each contribute to the a divalent metal cation site. Disordered stretches follow at residues 564–597 and 630–664; these read DSLFPPSVDGGDDKSPSNALSPLPDLRNSSTSPS and RAAKEEEERKIKEAAEAEAAAKQVEENKENGVTTN. A compositionally biased stretch (basic and acidic residues) spans 630–644; the sequence is RAAKEEEERKIKEAA.

This sequence belongs to the cyclic nucleotide phosphodiesterase family. Interacts with cmd-1 in the presence of Ca(2+). Requires a divalent metal cation as cofactor. As to expression, expressed in AFD thermosensory neurons.

It catalyses the reaction a nucleoside 3',5'-cyclic phosphate + H2O = a nucleoside 5'-phosphate + H(+). Its function is as follows. Redundantly with pde-5, plays a role in the AFD thermosensory neurons to regulate microvilli receptive ending morphology, possibly by regulating cGMP levels. The chain is Probable 3',5'-cyclic phosphodiesterase pde-1 (pde-1) from Caenorhabditis elegans.